Here is a 580-residue protein sequence, read N- to C-terminus: MAGTVRTACLVVAMLLSLDFPGQAQPPPPPPDATCHQVRSFFQRLQPGLKWVPETPVPGSDLQVCLPKGPTCCSRKMEEKYQLTARLNMEQLLQSASMELKFLIIQNAAVFQEAFEIVVRHAKNYTNAMFKNNYPSLTPQAFEFVGEFFTDVSLYILGSDINVDDMVNELFDSLFPVIYTQLMNPGLPDSALDINECLRGARRDLKVFGNFPKLIMTQVSKSLQVTRIFLQALNLGIEVINTTDHLKFSKDCGRMLTRMWYCSYCQGLMMVKPCGGYCNVVMQGCMAGVVEIDKYWREYILSLEELVNGMYRIYDMENVLLGLFSTIHDSIQYVQKNAGKLTTTIGKLCAHSQQRQYRSAYYPEDLFIDKKVLKVAHVEHEETLSSRRRELIQKLKSFISFYSALPGYICSHSPVAENDTLCWNGQELVERYSQKAARNGMKNQFNLHELKMKGPEPVVSQIIDKLKHINQLLRTMSMPKGRVLDKNLDEEGFESGDCGDDEDECIGGSGDGMIKVKNQLRFLAELAYDLDVDDAPGNSQQATPKDNEISTFHNLGNVHSPLKLLTSMAISVVCFFFLVH.

An N-terminal signal peptide occupies residues 1-24; that stretch reads MAGTVRTACLVVAMLLSLDFPGQA. The residue at position 25 (Gln-25) is a Pyrrolidone carboxylic acid. 7 disulfide bridges follow: Cys-35–Cys-72, Cys-65–Cys-262, Cys-73–Cys-265, Cys-197–Cys-349, Cys-252–Cys-285, Cys-274–Cys-422, and Cys-278–Cys-410. Residues Asn-124 and Asn-241 are each glycosylated (N-linked (GlcNAc...) asparagine). Ser-352 bears the Phosphoserine; by FAM20C mark. Asn-418 is a glycosylation site (N-linked (GlcNAc...) asparagine). Residues Ser-495 and Ser-509 are each glycosylated (O-linked (Xyl...) (glycosaminoglycan) serine). Asn-554 carries the GPI-anchor amidated asparagine lipid modification. The propeptide at 555-580 is removed in mature form; the sequence is LGNVHSPLKLLTSMAISVVCFFFLVH.

This sequence belongs to the glypican family. In terms of assembly, heterodimer; disulfide-linked. Cleavage by a furin-like convertase results in production of alpha and beta chains which form a disulfide-linked heterodimer. Interacts with DPP4. Interacts with FGF2. Interacts with WNT5A. Also interacts with WNT3A and WNT7B. Interacts with hedgehog protein SHH; the heparan sulfate chains are not required for the interaction. Also interacts with hedgehog protein IHH. Interacts with CD81. Interacts with Wnt receptors FZD4, FZD7 and FZD8; the heparan sulfate chains are required for the interaction. In terms of processing, O-glycosylated; contains heparan sulfate and/or chondroitin sulfate. Cleaved intracellularly by a furin-like convertase to generate 2 subunits, alpha and beta, which remain associated through disulfide bonds and are associated with the cell surface via the GPI-anchor. This processing is essential for its role in inhibition of hedgehog signaling. A second proteolytic event may result in cleavage of the protein on the cell surface, separating it from the GPI-anchor and leading to its shedding from the cell surface. Detected in placenta (at protein level). Highly expressed in lung, liver and kidney.

It is found in the cell membrane. In terms of biological role, cell surface proteoglycan. Negatively regulates the hedgehog signaling pathway when attached via the GPI-anchor to the cell surface by competing with the hedgehog receptor PTC1 for binding to hedgehog proteins. Binding to the hedgehog protein SHH triggers internalization of the complex by endocytosis and its subsequent lysosomal degradation. Positively regulates the canonical Wnt signaling pathway by binding to the Wnt receptor Frizzled and stimulating the binding of the Frizzled receptor to Wnt ligands. Positively regulates the non-canonical Wnt signaling pathway. Binds to CD81 which decreases the availability of free CD81 for binding to the transcriptional repressor HHEX, resulting in nuclear translocation of HHEX and transcriptional repression. Inhibits the dipeptidyl peptidase activity of DPP4. Plays a role in limb patterning and skeletal development by controlling the cellular response to BMP4. Modulates the effects of growth factors BMP2, BMP7 and FGF7 on renal branching morphogenesis. Required for coronary vascular development. Plays a role in regulating cell movements during gastrulation. The protein is Glypican-3 (GPC3) of Homo sapiens (Human).